We begin with the raw amino-acid sequence, 348 residues long: Phenylalanine--tRNA ligase alpha subunit (348 aa).

Glu-259 contacts Mg(2+).

Belongs to the class-II aminoacyl-tRNA synthetase family. Phe-tRNA synthetase alpha subunit type 1 subfamily. In terms of assembly, tetramer of two alpha and two beta subunits. Mg(2+) is required as a cofactor.

The protein resides in the cytoplasm. The enzyme catalyses tRNA(Phe) + L-phenylalanine + ATP = L-phenylalanyl-tRNA(Phe) + AMP + diphosphate + H(+). The sequence is that of Phenylalanine--tRNA ligase alpha subunit from Levilactobacillus brevis (strain ATCC 367 / BCRC 12310 / CIP 105137 / JCM 1170 / LMG 11437 / NCIMB 947 / NCTC 947) (Lactobacillus brevis).